A 482-amino-acid polypeptide reads, in one-letter code: Aspartyl/glutamyl-tRNA(Asn/Gln) amidotransferase subunit B (482 aa).

This sequence belongs to the GatB/GatE family. GatB subfamily. In terms of assembly, heterotrimer of A, B and C subunits.

The enzyme catalyses L-glutamyl-tRNA(Gln) + L-glutamine + ATP + H2O = L-glutaminyl-tRNA(Gln) + L-glutamate + ADP + phosphate + H(+). The catalysed reaction is L-aspartyl-tRNA(Asn) + L-glutamine + ATP + H2O = L-asparaginyl-tRNA(Asn) + L-glutamate + ADP + phosphate + 2 H(+). Functionally, allows the formation of correctly charged Asn-tRNA(Asn) or Gln-tRNA(Gln) through the transamidation of misacylated Asp-tRNA(Asn) or Glu-tRNA(Gln) in organisms which lack either or both of asparaginyl-tRNA or glutaminyl-tRNA synthetases. The reaction takes place in the presence of glutamine and ATP through an activated phospho-Asp-tRNA(Asn) or phospho-Glu-tRNA(Gln). The protein is Aspartyl/glutamyl-tRNA(Asn/Gln) amidotransferase subunit B of Methanoregula boonei (strain DSM 21154 / JCM 14090 / 6A8).